The primary structure comprises 365 residues: Isopentenyl-diphosphate delta-isomerase (365 aa).

Residue 8–9 coordinates substrate; that stretch reads RK. Residues 67–69, S97, and N126 contribute to the FMN site; that span reads SIT. 97–99 is a substrate binding site; the sequence is SQR. Residue Q160 participates in substrate binding. E161 is a binding site for Mg(2+). FMN contacts are provided by residues K192, T222, 272–274, and 293–294; these read GIR and AL.

It belongs to the IPP isomerase type 2 family. As to quaternary structure, homooctamer. Dimer of tetramers. Requires FMN as cofactor. It depends on NADPH as a cofactor. The cofactor is Mg(2+).

It is found in the cytoplasm. The enzyme catalyses isopentenyl diphosphate = dimethylallyl diphosphate. Its function is as follows. Involved in the biosynthesis of isoprenoids. Catalyzes the 1,3-allylic rearrangement of the homoallylic substrate isopentenyl (IPP) to its allylic isomer, dimethylallyl diphosphate (DMAPP). In Methanosarcina mazei (strain ATCC BAA-159 / DSM 3647 / Goe1 / Go1 / JCM 11833 / OCM 88) (Methanosarcina frisia), this protein is Isopentenyl-diphosphate delta-isomerase.